A 440-amino-acid chain; its full sequence is Zinc finger MYND domain-containing protein 10 (440 aa).

The tract at residues 366–440 (QDLRLQARRW…VLAAQGDRAK (75 aa)) is interaction with DNAAF11. 8 residues coordinate Zn(2+): cysteine 394, cysteine 397, cysteine 405, cysteine 408, cysteine 414, cysteine 418, histidine 426, and cysteine 430. The MYND-type zinc-finger motif lies at 394-430 (CAYCSAEASKRCSRCQNEWYCCRECQVKHWEKHGKTC).

Belongs to the ZMYND10 family. As to quaternary structure, interacts (via C-terminus) with DNAAF11 (via CS domain); this interaction stabilizes DNAAF11 at the protein level. Interacts (via C-terminus) with DNAL1; this interaction stabilizes DNAL1 at the protein level. Interacts with DNAAF4, HSPA8, IQUB, RUVBL2 and DYNTL5.

It localises to the cytoplasm. Its subcellular location is the cytoskeleton. The protein localises to the microtubule organizing center. The protein resides in the centrosome. It is found in the centriolar satellite. It localises to the apical cell membrane. Its subcellular location is the dynein axonemal particle. Its function is as follows. Plays a role in axonemal structure organization and motility. Involved in axonemal pre-assembly of inner and outer dynein arms (IDA and ODA, respectively) for proper axoneme building for cilia motility. May act by indirectly regulating transcription of dynein proteins. The sequence is that of Zinc finger MYND domain-containing protein 10 from Homo sapiens (Human).